We begin with the raw amino-acid sequence, 283 residues long: NAD kinase (283 aa).

The active-site Proton acceptor is the Asp66. Residues 66-67 (DG), 137-138 (ND), Arg165, Asp167, and 178-183 (TGYSLS) each bind NAD(+).

Belongs to the NAD kinase family. Requires a divalent metal cation as cofactor.

The protein resides in the cytoplasm. It carries out the reaction NAD(+) + ATP = ADP + NADP(+) + H(+). In terms of biological role, involved in the regulation of the intracellular balance of NAD and NADP, and is a key enzyme in the biosynthesis of NADP. Catalyzes specifically the phosphorylation on 2'-hydroxyl of the adenosine moiety of NAD to yield NADP. This Chloroherpeton thalassium (strain ATCC 35110 / GB-78) protein is NAD kinase.